Consider the following 89-residue polypeptide: Cell division topological specificity factor (89 aa).

Belongs to the MinE family.

Its function is as follows. Prevents the cell division inhibition by proteins MinC and MinD at internal division sites while permitting inhibition at polar sites. This ensures cell division at the proper site by restricting the formation of a division septum at the midpoint of the long axis of the cell. This chain is Cell division topological specificity factor, found in Sodalis glossinidius (strain morsitans).